Here is a 278-residue protein sequence, read N- to C-terminus: NADPH-dependent 7-cyano-7-deazaguanine reductase (278 aa).

87–89 (IES) is a binding site for substrate. 89–90 (SK) contributes to the NADPH binding site. Catalysis depends on Cys185, which acts as the Thioimide intermediate. Asp192 functions as the Proton donor in the catalytic mechanism. Substrate is bound at residue 224-225 (HE). Position 253 to 254 (253 to 254 (RG)) interacts with NADPH. The disordered stretch occupies residues 255–278 (GLDINPYRSTNPTFSVQNHRSFRQ). The segment covering 261–278 (YRSTNPTFSVQNHRSFRQ) has biased composition (polar residues).

Belongs to the GTP cyclohydrolase I family. QueF type 2 subfamily. In terms of assembly, homodimer.

It localises to the cytoplasm. The enzyme catalyses 7-aminomethyl-7-carbaguanine + 2 NADP(+) = 7-cyano-7-deazaguanine + 2 NADPH + 3 H(+). The protein operates within tRNA modification; tRNA-queuosine biosynthesis. Its function is as follows. Catalyzes the NADPH-dependent reduction of 7-cyano-7-deazaguanine (preQ0) to 7-aminomethyl-7-deazaguanine (preQ1). This is NADPH-dependent 7-cyano-7-deazaguanine reductase from Coxiella burnetii (strain CbuK_Q154) (Coxiella burnetii (strain Q154)).